The chain runs to 324 residues: Uric acid degradation bifunctional protein TTL (324 aa).

A2 carries the N-acetylalanine modification. The segment at 2-29 (AMEIGEDEWKVCCGSSEFAKQMSTSGPL) is required for BRI1-binding. The segment at 2-161 (AMEIGEDEWK…LRMAKLFSDK (160 aa)) is OHCU decarboxylase. Catalysis depends on H58, which acts as the Proton donor; for OHCU decarboxylase activity. (S)-allantoin is bound by residues H58, P59, E80, F111, I113, and A115. The tract at residues 178–324 (KPQDRLRIIG…PFSFSTYRGS (147 aa)) is HIU hydrolase. Residues 182–190 (RLRIIGGHL) carry the Internal peroxisomal targeting signal (PTS2) motif.

It in the N-terminal section; belongs to the OHCU decarboxylase family. In the C-terminal section; belongs to the transthyretin family. 5-hydroxyisourate hydrolase subfamily. As to quaternary structure, homodimer. Forms tetramers. Interacts with BRI1 in a kinase-dependent manner. Interacts with B1L. In terms of processing, phosphorylated by BRI1 in vitro. In terms of tissue distribution, expressed ubiquitously with highest levels in flowers buds and elongating inflorescences. Mainly expressed in stems and leaves, and, to a lower extent, in flowers, flower buds and seedlings. As to expression, strongly expressed in flower buds and leaves, to a lower extent in stems, and at low levels in seedlings and flowers.

It localises to the cell membrane. The protein localises to the peroxisome. Its subcellular location is the cytoplasm. It is found in the cytosol. It catalyses the reaction 5-hydroxyisourate + H2O = 5-hydroxy-2-oxo-4-ureido-2,5-dihydro-1H-imidazole-5-carboxylate + H(+). It carries out the reaction 5-hydroxy-2-oxo-4-ureido-2,5-dihydro-1H-imidazole-5-carboxylate + H(+) = (S)-allantoin + CO2. The protein operates within purine metabolism; urate degradation; (S)-allantoin from urate: step 2/3. It functions in the pathway purine metabolism; urate degradation; (S)-allantoin from urate: step 3/3. Functionally, involved in the last two steps of the degradation of uric acid, i.e. the hydrolysis of 5-hydroxyisourate (HIU) to 2-oxo-4-hydroxy-4-carboxy-5-ureidoimidazoline (OHCU) and its stereoselective decarboxylation to (S)-allantoin, a major ureide compound. Might function as a negative regulator to modulate brassinosteroid-mediated plant growth. Together with B1L, prevents plant growth and development, but by opposition to B1L, negatively regulates cold tolerance, probably in a brassinosteroid (BR) and allantoin-dependent manner. The polypeptide is Uric acid degradation bifunctional protein TTL (Arabidopsis thaliana (Mouse-ear cress)).